Consider the following 503-residue polypeptide: Glucose-6-phosphate 1-dehydrogenase (503 aa).

NADP(+) is bound by residues G14–K21, R49, and K158. D-glucose 6-phosphate is bound by residues K158, H188–K192, E226, and D245. H250 functions as the Proton acceptor in the catalytic mechanism. Position 341 (K341) interacts with NADP(+). Position 344 (K344) interacts with D-glucose 6-phosphate. Residues K350, R354, and R376 each contribute to the NADP(+) site. Residue Q378 coordinates D-glucose 6-phosphate. NADP(+)-binding positions include Y384–K386, R471, and Y487.

Belongs to the glucose-6-phosphate dehydrogenase family.

The catalysed reaction is D-glucose 6-phosphate + NADP(+) = 6-phospho-D-glucono-1,5-lactone + NADPH + H(+). Its pathway is carbohydrate degradation; pentose phosphate pathway; D-ribulose 5-phosphate from D-glucose 6-phosphate (oxidative stage): step 1/3. Functionally, catalyzes the rate-limiting step of the oxidative pentose-phosphate pathway, which represents a route for the dissimilation of carbohydrates besides glycolysis. The main function of this enzyme is to provide reducing power (NADPH) and pentose phosphates for fatty acid and nucleic acid synthesis. The G6PDH activity is required to cope with hydrogen peroxide and potassium bisulfite stresses and plays a role in adaptation to conditions used in wine fermentations. In Hanseniaspora uvarum (Yeast), this protein is Glucose-6-phosphate 1-dehydrogenase.